The primary structure comprises 331 residues: Anthranilate phosphoribosyltransferase (331 aa).

5-phospho-alpha-D-ribose 1-diphosphate is bound by residues Gly-79, 82-83 (GD), Ser-87, 89-92 (NIST), 107-115 (KHCNGNISS), and Ser-119. Residue Gly-79 participates in anthranilate binding. Ser-91 contributes to the Mg(2+) binding site. Residue Asn-110 participates in anthranilate binding. Arg-165 lines the anthranilate pocket. 2 residues coordinate Mg(2+): Asp-223 and Glu-224.

The protein belongs to the anthranilate phosphoribosyltransferase family. In terms of assembly, homodimer. Mg(2+) serves as cofactor.

It catalyses the reaction N-(5-phospho-beta-D-ribosyl)anthranilate + diphosphate = 5-phospho-alpha-D-ribose 1-diphosphate + anthranilate. It participates in amino-acid biosynthesis; L-tryptophan biosynthesis; L-tryptophan from chorismate: step 2/5. Catalyzes the transfer of the phosphoribosyl group of 5-phosphorylribose-1-pyrophosphate (PRPP) to anthranilate to yield N-(5'-phosphoribosyl)-anthranilate (PRA). This chain is Anthranilate phosphoribosyltransferase, found in Buchnera aphidicola subsp. Baizongia pistaciae (strain Bp).